The primary structure comprises 252 residues: 5-oxoprolinase subunit A (252 aa).

This sequence belongs to the LamB/PxpA family. As to quaternary structure, forms a complex composed of PxpA, PxpB and PxpC.

It catalyses the reaction 5-oxo-L-proline + ATP + 2 H2O = L-glutamate + ADP + phosphate + H(+). Its function is as follows. Catalyzes the cleavage of 5-oxoproline to form L-glutamate coupled to the hydrolysis of ATP to ADP and inorganic phosphate. The chain is 5-oxoprolinase subunit A from Chloroflexus aggregans (strain MD-66 / DSM 9485).